Reading from the N-terminus, the 489-residue chain is Glutamyl-tRNA(Gln) amidotransferase subunit A (489 aa).

Residues K79 and S158 each act as charge relay system in the active site. S182 (acyl-ester intermediate) is an active-site residue.

Belongs to the amidase family. GatA subfamily. Heterotrimer of A, B and C subunits.

It carries out the reaction L-glutamyl-tRNA(Gln) + L-glutamine + ATP + H2O = L-glutaminyl-tRNA(Gln) + L-glutamate + ADP + phosphate + H(+). In terms of biological role, allows the formation of correctly charged Gln-tRNA(Gln) through the transamidation of misacylated Glu-tRNA(Gln) in organisms which lack glutaminyl-tRNA synthetase. The reaction takes place in the presence of glutamine and ATP through an activated gamma-phospho-Glu-tRNA(Gln). The sequence is that of Glutamyl-tRNA(Gln) amidotransferase subunit A from Anaplasma marginale (strain Florida).